A 93-amino-acid polypeptide reads, in one-letter code: Small ribosomal subunit protein uS19 (93 aa).

It belongs to the universal ribosomal protein uS19 family.

In terms of biological role, protein S19 forms a complex with S13 that binds strongly to the 16S ribosomal RNA. This Cutibacterium acnes (strain DSM 16379 / KPA171202) (Propionibacterium acnes) protein is Small ribosomal subunit protein uS19.